Here is a 500-residue protein sequence, read N- to C-terminus: Monocarboxylate transporter 1 (500 aa).

Residues 1 to 22 are Cytoplasmic-facing; it reads MPPAVGGPVGYTPPDGGWGWAV. A helical membrane pass occupies residues 23–44; sequence VIGAFISIGFSYAFPKSITVFF. K38 is a binding site for (S)-lactate. At 45–55 the chain is on the extracellular side; sequence KEIEGIFHATT. Residues 56-80 form a helical membrane-spanning segment; that stretch reads SEVSWISSIMLAVMYGGGPISSILV. Topologically, residues 81–84 are cytoplasmic; it reads NKYG. Residues 85–105 form a helical membrane-spanning segment; it reads SRIVMIVGGCLSGCGLIAASF. The Extracellular portion of the chain corresponds to 106 to 109; the sequence is CNTV. The helical transmembrane segment at 110-132 threads the bilayer; that stretch reads QQLYVCIGVIGGLGLAFNLNPAL. At 133–146 the chain is on the cytoplasmic side; that stretch reads TMIGKYFYKRRPLA. Residues 147–169 traverse the membrane as a helical segment; the sequence is NGLAMAGSPVFLCTLAPLNQVFF. Residues 170–174 are Extracellular-facing; sequence GIFGW. A helical transmembrane segment spans residues 175–194; it reads RGSFLILGGLLLNCCVAGAL. Topologically, residues 195 to 261 are cytoplasmic; the sequence is MRPIGPKPTK…FLDLTLFTHR (67 aa). A phosphoserine mark is found at S210 and S213. At T231 the chain carries Phosphothreonine. A helical membrane pass occupies residues 262-288; the sequence is GFLLYLSGNVIMFFGLFAPLVFLSSYG. Residues 289–295 lie on the Extracellular side of the membrane; sequence KSQHYSS. The helical transmembrane segment at 296-317 threads the bilayer; it reads EKSAFLLSILAFVDMVARPSMG. A H(+)-binding site is contributed by D309. A (S)-lactate-binding site is contributed by R313. Topologically, residues 318–328 are cytoplasmic; the sequence is LVANTKPIRPR. Residues 329–349 form a helical membrane-spanning segment; the sequence is IQYFFAASVVANGVCHMLAPL. At 350–353 the chain is on the extracellular side; sequence STTY. Residues 354 to 375 traverse the membrane as a helical segment; that stretch reads VGFCVYAGFFGFAFGWLSSVLF. The Cytoplasmic segment spans residues 376-389; the sequence is ETLMDLVGPQRFSS. Residues 390–410 traverse the membrane as a helical segment; that stretch reads AVGLVTIVECCPVLLGPPLLG. Residues 411 to 421 lie on the Extracellular side of the membrane; it reads RLNDMYGDYKY. A helical transmembrane segment spans residues 422 to 443; that stretch reads TYWACGVVLIISGIYLFIGMGI. At 444–500 the chain is on the cytoplasmic side; that stretch reads NYRLLAKEQKANEQKKESKEEETSIDVAGKPNEVTKAAESPDQKDTDGGPKEEESPV. The segment covering 454-465 has biased composition (basic and acidic residues); that stretch reads ANEQKKESKEEE. A disordered region spans residues 454–500; that stretch reads ANEQKKESKEEETSIDVAGKPNEVTKAAESPDQKDTDGGPKEEESPV. At S461 the chain carries Phosphoserine. T466 is modified (phosphothreonine). A phosphoserine mark is found at S467, S483, and S498. A compositionally biased stretch (basic and acidic residues) spans 482–500; sequence ESPDQKDTDGGPKEEESPV.

It belongs to the major facilitator superfamily. Monocarboxylate porter (TC 2.A.1.13) family. In terms of assembly, interacts with EMB; interaction mediates SLC16A1 targeting to the plasma membrane. Interacts with isoform 2 of BSG; interaction mediates SLC16A1 targeting to the plasma membrane. As to expression, widely expressed. Detected in heart and in blood lymphocytes and monocytes (at protein level).

Its subcellular location is the cell membrane. It is found in the basolateral cell membrane. The protein localises to the apical cell membrane. The catalysed reaction is (S)-lactate(in) + H(+)(in) = (S)-lactate(out) + H(+)(out). It catalyses the reaction acetate(out) + H(+)(out) = acetate(in) + H(+)(in). It carries out the reaction acetoacetate(out) + H(+)(out) = acetoacetate(in) + H(+)(in). The enzyme catalyses pyruvate(out) + H(+)(out) = pyruvate(in) + H(+)(in). The catalysed reaction is (R)-3-hydroxybutanoate(out) + H(+)(out) = (R)-3-hydroxybutanoate(in) + H(+)(in). It catalyses the reaction 3-methyl-2-oxobutanoate(out) + H(+)(out) = 3-methyl-2-oxobutanoate(in) + H(+)(in). It carries out the reaction 4-methyl-2-oxopentanoate(out) + H(+)(out) = 4-methyl-2-oxopentanoate(in) + H(+)(in). The enzyme catalyses succinate(in) + 2 H(+)(in) = succinate(out) + 2 H(+)(out). Selectively inhibited by AZD3965, that acts as a competitive inhibitor binding to the central channel in the outward open conformation. Bidirectional proton-coupled monocarboxylate transporter. Catalyzes the rapid transport across the plasma membrane of many monocarboxylates such as lactate, pyruvate, acetate and the ketone bodies acetoacetate and beta-hydroxybutyrate, and thus contributes to the maintenance of intracellular pH. The transport direction is determined by the proton motive force and the concentration gradient of the substrate monocarboxylate. MCT1 is a major lactate exporter. Plays a role in cellular responses to a high-fat diet by modulating the cellular levels of lactate and pyruvate that contribute to the regulation of central metabolic pathways and insulin secretion, with concomitant effects on plasma insulin levels and blood glucose homeostasis. Facilitates the protonated monocarboxylate form of succinate export, that its transient protonation upon muscle cell acidification in exercising muscle and ischemic heart. Functions via alternate outward- and inward-open conformation states. Protonation and deprotonation of 309-Asp is essential for the conformational transition. The chain is Monocarboxylate transporter 1 from Homo sapiens (Human).